We begin with the raw amino-acid sequence, 959 residues long: Kinesin-like protein NACK1 (959 aa).

The disordered stretch occupies residues 1–28 (MTVRTPGTPASKIDKTPATTPNGHRGRE). Residues 30–353 (KIVVTVRLRP…LYFATRAKEV (324 aa)) enclose the Kinesin motor domain. 117 to 124 (GQTSSGKT) serves as a coordination point for ATP. T145 is modified (phosphothreonine). A coiled-coil region spans residues 362-429 (VVSDKQLVKH…LRRKLQEEQG (68 aa)). Disordered regions lie at residues 417 to 438 (VDELRRKLQEEQGPKPSESVSP), 451 to 473 (SPNLEEKAPVRSERTRNTMGRQS), 598 to 640 (LPSN…FLKS), and 658 to 700 (NRAP…SVNM). Basic and acidic residues-rich tracts occupy residues 418-429 (DELRRKLQEEQG) and 454-466 (LEEKAPVRSERTR). Positions 557–598 (KSVSANLKEEIARLHSQGSTIADLEEQLENVQKSLDKLVMSL) form a coiled coil. Low complexity predominate over residues 600-611 (SNNDQQSNNDTT). The span at 613 to 623 (KAKHPSKKKKL) shows a compositional bias: basic residues. Positions 630-640 (NSINRQNFLKS) are enriched in polar residues. Residues T675 and T690 each carry the phosphothreonine modification. A required for the binding to NPK1 region spans residues 685–756 (SSKEGTPYRR…EANEAAGYNL (72 aa)).

The protein belongs to the TRAFAC class myosin-kinesin ATPase superfamily. Kinesin family. KIN-7 subfamily. Interacts (via C-terminus) with NPK1 (via C-terminus). Phosphorylated at Thr-145, Thr-675 and Thr-690 by CDKAs and CDKBs. The phosphorylation occurs before metaphase and inhibits the interaction with NPK1 preventing the transition to cytokinesis.

The protein resides in the cytoplasm. Its subcellular location is the nucleus. It localises to the cytoskeleton. It is found in the phragmoplast. Its function is as follows. Probable plus end-directed motor protein that functions in the NACK-PQR (NPK1-NQK1/MEK1-NRK1) MAP kinase signaling pathway, which is essential for somatic cell cytokinesis, especially for the cell-plate formation and its expansion. Regulates the activity and the localization of NPK1 by association through the non-catalytic region of the kinase. In Nicotiana tabacum (Common tobacco), this protein is Kinesin-like protein NACK1 (NACK1).